The chain runs to 622 residues: UvrABC system protein C (622 aa).

Positions 13-92 (DKPGVYLMKN…IKKYRPRYNI (80 aa)) constitute a GIY-YIG domain. Residues 204-239 (KDIIRKLKEDMDTLSENMEFEKAAELRDKIFALEKI) form the UVR domain.

This sequence belongs to the UvrC family. In terms of assembly, interacts with UvrB in an incision complex.

The protein localises to the cytoplasm. In terms of biological role, the UvrABC repair system catalyzes the recognition and processing of DNA lesions. UvrC both incises the 5' and 3' sides of the lesion. The N-terminal half is responsible for the 3' incision and the C-terminal half is responsible for the 5' incision. This is UvrABC system protein C from Clostridium kluyveri (strain ATCC 8527 / DSM 555 / NBRC 12016 / NCIMB 10680 / K1).